The sequence spans 365 residues: Zinc finger protein lsy-2 (365 aa).

Residues 1–36 are disordered; sequence MLTRRNAKQSQRNSADQSLSEFNSSSMTHGSNQSVY. The segment covering 8-36 has biased composition (polar residues); the sequence is KQSQRNSADQSLSEFNSSSMTHGSNQSVY. 5 C2H2-type zinc fingers span residues 78–100, 106–128, 134–156, 264–287, and 296–318; these read HQCN…AVIH, FRCD…RSVH, HACP…LRTH, HDCP…TLEH, and FFCE…MSYH.

The protein localises to the nucleus speckle. In terms of biological role, involved in transcriptional regulation. Required to specify left-right asymmetry of the ASE gustatory neurons, probably acting upstream of microRNA lsy-6. Involved in maintaining the distinction between somatic and germ cells, perhaps acting by repressing germ cell-specific genes in somatic cells. This is Zinc finger protein lsy-2 from Caenorhabditis elegans.